Consider the following 199-residue polypeptide: Recombination protein RecR (199 aa).

Residues 57–72 (CERCNNLSEAPLCAVC) form a C4-type zinc finger. The Toprim domain occupies 80–174 (SILCVVESPA…TISRIARGVP (95 aa)).

This sequence belongs to the RecR family.

In terms of biological role, may play a role in DNA repair. It seems to be involved in an RecBC-independent recombinational process of DNA repair. It may act with RecF and RecO. The protein is Recombination protein RecR of Acidithiobacillus ferrooxidans (strain ATCC 23270 / DSM 14882 / CIP 104768 / NCIMB 8455) (Ferrobacillus ferrooxidans (strain ATCC 23270)).